The chain runs to 714 residues: Fatty acid oxidation complex subunit alpha (714 aa).

Residues 1 to 190 are enoyl-CoA hydratase; that stretch reads MEMTSAFTLN…KLGLVDDVVP (190 aa). Residues 306-714 are 3-hydroxyacyl-CoA dehydrogenase; sequence APLNSVGILG…FWKTTATDLQ (409 aa).

The protein in the N-terminal section; belongs to the enoyl-CoA hydratase/isomerase family. In the central section; belongs to the 3-hydroxyacyl-CoA dehydrogenase family. In terms of assembly, heterotetramer of two alpha chains (FadJ) and two beta chains (FadI).

It is found in the cytoplasm. The enzyme catalyses a (3S)-3-hydroxyacyl-CoA = a (2E)-enoyl-CoA + H2O. It carries out the reaction a 4-saturated-(3S)-3-hydroxyacyl-CoA = a (3E)-enoyl-CoA + H2O. It catalyses the reaction a (3S)-3-hydroxyacyl-CoA + NAD(+) = a 3-oxoacyl-CoA + NADH + H(+). The catalysed reaction is (3S)-3-hydroxybutanoyl-CoA = (3R)-3-hydroxybutanoyl-CoA. Its pathway is lipid metabolism; fatty acid beta-oxidation. Functionally, catalyzes the formation of a hydroxyacyl-CoA by addition of water on enoyl-CoA. Also exhibits 3-hydroxyacyl-CoA epimerase and 3-hydroxyacyl-CoA dehydrogenase activities. The polypeptide is Fatty acid oxidation complex subunit alpha (Escherichia coli (strain 55989 / EAEC)).